We begin with the raw amino-acid sequence, 179 residues long: Large ribosomal subunit protein uL5 (179 aa).

Belongs to the universal ribosomal protein uL5 family. As to quaternary structure, part of the 50S ribosomal subunit; part of the 5S rRNA/L5/L18/L25 subcomplex. Contacts the 5S rRNA and the P site tRNA. Forms a bridge to the 30S subunit in the 70S ribosome.

Its function is as follows. This is one of the proteins that bind and probably mediate the attachment of the 5S RNA into the large ribosomal subunit, where it forms part of the central protuberance. In the 70S ribosome it contacts protein S13 of the 30S subunit (bridge B1b), connecting the 2 subunits; this bridge is implicated in subunit movement. Contacts the P site tRNA; the 5S rRNA and some of its associated proteins might help stabilize positioning of ribosome-bound tRNAs. The polypeptide is Large ribosomal subunit protein uL5 (Buchnera aphidicola subsp. Acyrthosiphon kondoi (Acyrthosiphon kondoi symbiotic bacterium)).